A 147-amino-acid polypeptide reads, in one-letter code: MAGNSILLAAVSILSACQQSYFALQVGKARLKYKVTPPAVTGSPEFERVFRAQQNCVEFYPIFIITLWMAGWYFNQVFATCLGLVYIYGRHLYFWGYSEAAKKRITGFRLSLGILALLTLLGALGIANSFLDEYLDLNIAKKLRRQF.

The next 3 helical transmembrane spans lie at 6–26, 59–79, and 111–131; these read ILLA…ALQV, FYPI…QVFA, and SLGI…NSFL.

It belongs to the MAPEG family. Homotrimer. Liver, spleen, skeletal muscle, heart, adrenals, pancreas, prostate, testis, fetal liver, and fetal spleen. Very low expression in lung, brain, placenta and bone marrow. Abundantly expressed in human umbilical vein endothelial cells (at protein level).

The protein localises to the endoplasmic reticulum membrane. The protein resides in the microsome membrane. It catalyses the reaction RX + glutathione = an S-substituted glutathione + a halide anion + H(+). The catalysed reaction is 1-chloro-2,4-dinitrobenzene + glutathione = 2,4-dinitrophenyl-S-glutathione + chloride + H(+). It carries out the reaction leukotriene C4 = leukotriene A4 + glutathione. The enzyme catalyses (5S)-hydroperoxy-(6E,8Z,11Z,14Z)-eicosatetraenoate + 2 glutathione = (5S)-hydroxy-(6E,8Z,11Z,14Z)-eicosatetraenoate + glutathione disulfide + H2O. Each monomer can bind on GSH molecule but only one subunit is catalytically active. In terms of biological role, catalyzes several different glutathione-dependent reactions. Catalyzes the glutathione-dependent reduction of lipid hydroperoxides, such as 5-HPETE. Has glutathione transferase activity, toward xenobiotic electrophiles, such as 1-chloro-2, 4-dinitrobenzene (CDNB). Also catalyzes the conjugation of leukotriene A4 with reduced glutathione to form leukotriene C4 (LTC4). Involved in oxidative DNA damage induced by ER stress and anticancer agents by activating LTC4 biosynthetic machinery in nonimmune cells. This is Microsomal glutathione S-transferase 2 (MGST2) from Homo sapiens (Human).